The chain runs to 273 residues: L-fucose dehydrogenase (273 aa).

NAD(+) is bound by residues Arg-19, Ile-21, Asp-40, Lys-41, Asp-62, Val-63, Asn-89, Tyr-154, Lys-158, Ile-187, Thr-189, and Leu-191. The active-site Proton acceptor is Tyr-154.

Belongs to the short-chain dehydrogenases/reductases (SDR) family. As to quaternary structure, homotetramer.

It is found in the cytoplasm. The catalysed reaction is L-fucose + NAD(+) = L-fucono-1,5-lactone + NADH + H(+). It catalyses the reaction D-arabinose + NAD(+) = D-arabinono-1,5-lactone + NADH + H(+). It carries out the reaction L-galactose + NAD(+) = L-galactono-1,5-lactone + NADH + H(+). Its pathway is carbohydrate degradation; L-fucose degradation. In terms of biological role, catalyzes the NAD(+)-dependent oxidation of L-fucose, yielding L-fucono-1,5-lactone, which rapidly converts spontaneously to L-fucone-1,4-lactone. Can also act on D-arabinose and L-galactose, with lower catalytic efficiency. Does not use NADPH. May be the initial enzyme of the putative L-fucose degradation pathway in mammals. This Mus musculus (Mouse) protein is L-fucose dehydrogenase.